The sequence spans 440 residues: Glutamate--tRNA ligase 1 (440 aa).

The 'HIGH' region signature appears at 7 to 17; the sequence is PSPTGYLHVGN. Residues 238-242 carry the 'KMSKS' region motif; it reads KISKR. Lys-241 provides a ligand contact to ATP.

Belongs to the class-I aminoacyl-tRNA synthetase family. Glutamate--tRNA ligase type 1 subfamily. As to quaternary structure, monomer.

Its subcellular location is the cytoplasm. The catalysed reaction is tRNA(Glu) + L-glutamate + ATP = L-glutamyl-tRNA(Glu) + AMP + diphosphate. Its function is as follows. Catalyzes the attachment of glutamate to tRNA(Glu) in a two-step reaction: glutamate is first activated by ATP to form Glu-AMP and then transferred to the acceptor end of tRNA(Glu). The protein is Glutamate--tRNA ligase 1 of Wolbachia sp. subsp. Brugia malayi (strain TRS).